The primary structure comprises 337 residues: Mitochondrial uncoupling protein 6 (337 aa).

Solcar repeat units lie at residues 4–136 (KPFL…LKRR), 145–236 (FPLV…VKEI), and 246–331 (GGIG…VRGL). The next 6 helical transmembrane spans lie at 6-26 (FLEG…LDLI), 105-125 (PAAL…YSAT), 151-171 (ITAG…ADVA), 210-230 (RGSW…LATY), 252-272 (VAAS…IDVV), and 304-324 (YKGL…LFLT).

Belongs to the mitochondrial carrier (TC 2.A.29) family.

The protein localises to the mitochondrion inner membrane. PUMPS are mitochondrial transporter proteins that create proton leaks across the inner mitochondrial membrane, thus uncoupling oxidative phosphorylation. This leads to a decrease in the efficiency of oxidative phosphorylation and an increase in heat production. May be involved in protecting plant cells against oxidative stress damage. Recombinant PUMP6, reconstituted into liposomes, transports a wide range of dicarboxylic acids including malate, oxaloacetate and succinate as well as phosphate, sulfate and thiosulfate. However, it is unknown if these transports are of any biological significance in vivo. The protein is Mitochondrial uncoupling protein 6 (PUMP6) of Arabidopsis thaliana (Mouse-ear cress).